Consider the following 484-residue polypeptide: Mitogen-activated protein kinase SLT2/MPK1 (484 aa).

The 296-residue stretch at 23 to 318 (FQLIKEIGHG…VDEALEHPYL (296 aa)) folds into the Protein kinase domain. ATP contacts are provided by residues 29–37 (IGHGAYGIV) and Lys54. Asp153 (proton acceptor) is an active-site residue. A Phosphothreonine modification is found at Thr190. A TXY motif is present at residues 190–192 (TEY). Tyr192 carries the post-translational modification Phosphotyrosine. The span at 383–392 (QQQQQQQQQP) shows a compositional bias: low complexity. Disordered stretches follow at residues 383–403 (QQQQ…AAAS) and 426–464 (IHSQ…PQND).

This sequence belongs to the protein kinase superfamily. CMGC Ser/Thr protein kinase family. MAP kinase subfamily. Interacts with RLM1. Requires Mg(2+) as cofactor. Dually phosphorylated on Thr-190 and Tyr-192, which activates the enzyme.

It catalyses the reaction L-seryl-[protein] + ATP = O-phospho-L-seryl-[protein] + ADP + H(+). It carries out the reaction L-threonyl-[protein] + ATP = O-phospho-L-threonyl-[protein] + ADP + H(+). Its activity is regulated as follows. Activated by tyrosine and threonine phosphorylation by MKK1 and MKK2. In terms of biological role, serine/threonine protein kinase involved in a signal transduction pathway that plays a role in yeast cell morphogenesis and cell growth. This pathway seems to start by SMP3; then involve the kinase PKC1 that may act the BCK1 kinase that then phosphorylates MKK1 and MKK2 which themselves phosphorylate the SLT2/MPK1 kinase which itself then phosphorylates and activates the transcription factor RLM1. Directly phosphorylates BCY1 upon TOR complex 1 (TORC1) inhibition. The protein is Mitogen-activated protein kinase SLT2/MPK1 (SLT2) of Saccharomyces cerevisiae (strain ATCC 204508 / S288c) (Baker's yeast).